The following is a 413-amino-acid chain: Serine hydroxymethyltransferase (413 aa).

Residues leucine 117 and 121 to 123 each bind (6S)-5,6,7,8-tetrahydrofolate; that span reads GHL. Lysine 226 is modified (N6-(pyridoxal phosphate)lysine). 349 to 351 provides a ligand contact to (6S)-5,6,7,8-tetrahydrofolate; it reads SPF.

This sequence belongs to the SHMT family. Homodimer. Pyridoxal 5'-phosphate is required as a cofactor.

The protein resides in the cytoplasm. It catalyses the reaction (6R)-5,10-methylene-5,6,7,8-tetrahydrofolate + glycine + H2O = (6S)-5,6,7,8-tetrahydrofolate + L-serine. It functions in the pathway one-carbon metabolism; tetrahydrofolate interconversion. It participates in amino-acid biosynthesis; glycine biosynthesis; glycine from L-serine: step 1/1. In terms of biological role, catalyzes the reversible interconversion of serine and glycine with tetrahydrofolate (THF) serving as the one-carbon carrier. This reaction serves as the major source of one-carbon groups required for the biosynthesis of purines, thymidylate, methionine, and other important biomolecules. Also exhibits THF-independent aldolase activity toward beta-hydroxyamino acids, producing glycine and aldehydes, via a retro-aldol mechanism. The protein is Serine hydroxymethyltransferase of Pelobacter propionicus (strain DSM 2379 / NBRC 103807 / OttBd1).